The sequence spans 295 residues: Structure-specific endonuclease subunit SLX1 (295 aa).

A GIY-YIG domain is found at 11 to 93 (EFYGVYILQS…QHPKTSRHMA (83 aa)). The segment at 85–133 (HPKTSRHMAGGGGSVTATAETAKSAPVAGKSDATSPAKNRRNAAPVARS) is disordered. The SLX1-type zinc-finger motif lies at 205–272 (CCLCSDAIDY…IPSDVSCSQC (68 aa)).

The protein belongs to the SLX1 family. In terms of assembly, forms a heterodimer with SLX4. A divalent metal cation is required as a cofactor.

It is found in the nucleus. Its function is as follows. Catalytic subunit of the SLX1-SLX4 structure-specific endonuclease that resolves DNA secondary structures generated during DNA repair and recombination. Has endonuclease activity towards branched DNA substrates, introducing single-strand cuts in duplex DNA close to junctions with ss-DNA. This chain is Structure-specific endonuclease subunit SLX1, found in Meyerozyma guilliermondii (strain ATCC 6260 / CBS 566 / DSM 6381 / JCM 1539 / NBRC 10279 / NRRL Y-324) (Yeast).